The primary structure comprises 181 residues: Large ribosomal subunit protein uL5 (181 aa).

This sequence belongs to the universal ribosomal protein uL5 family. As to quaternary structure, part of the 50S ribosomal subunit; part of the 5S rRNA/L5/L18/L25 subcomplex. Contacts the 5S rRNA and the P site tRNA. Forms a bridge to the 30S subunit in the 70S ribosome.

Functionally, this is one of the proteins that bind and probably mediate the attachment of the 5S RNA into the large ribosomal subunit, where it forms part of the central protuberance. In the 70S ribosome it contacts protein S13 of the 30S subunit (bridge B1b), connecting the 2 subunits; this bridge is implicated in subunit movement. Contacts the P site tRNA; the 5S rRNA and some of its associated proteins might help stabilize positioning of ribosome-bound tRNAs. This is Large ribosomal subunit protein uL5 from Trichodesmium erythraeum (strain IMS101).